The following is a 360-amino-acid chain: MEAVVVDAGSKLLKAGIALPDQSPSLVMPSKMKLEVEDGQMGDGAVVEEVVQPVVRGFVKDWDAMEDLLNYVLYSNIGWEIGDEGQILFTEPLFTPKALREQLAQLMFEKFNVSGFYDSEQAVLSLYAVGRISGCTVDIGHGKIDIAPVCEGAVQHIASKRFDIGGTDLTNLFAEELKKSNSSVNIDISDVERLKEQYACCAEDQMAFEAIGSSCRPERHTLPDGQVITIEKERYIVGEALFQPHILGLEDYGIVHQLVTSVSNVTPEYHRQLLENTMLCGGTASMTGFEDRFQREANLSASAICPSLVKPPEYMPENLARYSAWLGGAILAKVVFPQNQHVTKGDYDETGPSIVHKKCF.

Belongs to the actin family. Plant ARP7 subfamily.

The protein localises to the nucleus. Its subcellular location is the cytoplasm. In terms of biological role, essential protein required during embryogenesis and all plant development stages, probably through a chromatin-mediated regulation of gene expression. The sequence is that of Actin-related protein 7 (ARP7) from Oryza sativa subsp. indica (Rice).